A 159-amino-acid polypeptide reads, in one-letter code: UPF0587 protein v1g245604 (159 aa).

Zn(2+) is bound by residues cysteine 33, cysteine 36, cysteine 67, and cysteine 70.

Belongs to the UPF0587 family.

This Nematostella vectensis (Starlet sea anemone) protein is UPF0587 protein v1g245604.